Reading from the N-terminus, the 363-residue chain is Homeobox protein DTH-2 (363 aa).

Residues 133–192 constitute a DNA-binding region (homeobox); the sequence is RRKRRILFSQAQIYELERRFKQQKYLSAPEREHLANLINLTPTQVKIWFQNHRYKCKRSQ. Residues 189–246 form a disordered region; sequence KRSQKDKEKEQQKEKSYHLKKNIVDDKERSPNKQICNASSSDRSTPEEPVAKAKESGL. Residues 191–219 show a composition bias toward basic and acidic residues; the sequence is SQKDKEKEQQKEKSYHLKKNIVDDKERSP. The segment covering 220–231 has biased composition (polar residues); that stretch reads NKQICNASSSDR. A compositionally biased stretch (basic and acidic residues) spans 232 to 246; it reads STPEEPVAKAKESGL.

The protein belongs to the NK-2 homeobox family. In terms of tissue distribution, intestine and unidentified peripheral parenchymal cells. Slightly higher levels in the cephalic region compared to other body regions.

It localises to the nucleus. Its function is as follows. This protein might be involved in determination and/or differentiation of nerve cells in the continuous replacement of neurons in the cephalic region. In Girardia tigrina (Planarian), this protein is Homeobox protein DTH-2 (DTH-2).